We begin with the raw amino-acid sequence, 102 residues long: Omega-hexatoxin-Hi2b (102 aa).

The N-terminal stretch at 1–23 (MKFSKLSLTLALILTQAIFVLCG) is a signal peptide. A propeptide spanning residues 24–56 (KINEDFMENGLESHALHDEIRKPIDTEKADAER) is cleaved from the precursor. Intrachain disulfides connect Cys61–Cys75, Cys68–Cys81, and Cys74–Cys86. Leu98 bears the Leucine amide mark. Residues 100-102 (RAL) constitute a propeptide that is removed on maturation.

Belongs to the neurotoxin 15 family. 02 (omega-actx) subfamily. Expressed by the venom gland.

It is found in the secreted. Functionally, potent inhibitor of insect, but not mammalian, voltage-gated calcium channels (Cav). The sequence is that of Omega-hexatoxin-Hi2b from Hadronyche infensa (Fraser island funnel-web spider).